A 274-amino-acid polypeptide reads, in one-letter code: Nitrogenase iron protein (274 aa).

8–15 (GKGGIGKS) contributes to the ATP binding site. Cysteine 94 serves as a coordination point for [4Fe-4S] cluster. Arginine 97 is modified (ADP-ribosylarginine; by dinitrogenase reductase ADP-ribosyltransferase). Cysteine 131 is a binding site for [4Fe-4S] cluster.

Belongs to the NifH/BchL/ChlL family. Homodimer. [4Fe-4S] cluster is required as a cofactor. In terms of processing, the reversible ADP-ribosylation of Arg-97 inactivates the nitrogenase reductase and regulates nitrogenase activity.

It catalyses the reaction N2 + 8 reduced [2Fe-2S]-[ferredoxin] + 16 ATP + 16 H2O = H2 + 8 oxidized [2Fe-2S]-[ferredoxin] + 2 NH4(+) + 16 ADP + 16 phosphate + 6 H(+). In terms of biological role, the key enzymatic reactions in nitrogen fixation are catalyzed by the nitrogenase complex, which has 2 components: the iron protein and the molybdenum-iron protein. This is Nitrogenase iron protein from Chlorobium phaeobacteroides (strain BS1).